Here is a 169-residue protein sequence, read N- to C-terminus: MADYQHQQQHQRPADAFKGMFPEKGQAQVQGPSASKVIAVVTLLPLGGFLLLLAGLTFAGTLIGLALSTPLFVLCSPVLVPAAIVIGLAVTGFLTSGAFGITGISSLSWILKYLRGTSVPEQMEHAKRRAQDTAGHLGQKARETGQTVTGKGQEAGKTLEGGRGEEKKT.

2 helical membrane passes run 38–58 and 70–90; these read IAVV…GLTF and PLFV…GLAV. The short motif at 70-81 is the Proline-knot element; that stretch reads PLFVLCSPVLVP. 2 stretches are compositionally biased toward basic and acidic residues: residues 122-131 and 160-169; these read QMEHAKRRAQ and EGGRGEEKKT. The segment at 122 to 169 is disordered; that stretch reads QMEHAKRRAQDTAGHLGQKARETGQTVTGKGQEAGKTLEGGRGEEKKT.

The protein belongs to the oleosin family. Expressed in seeds (at protein level).

Its subcellular location is the lipid droplet. The protein resides in the membrane. May have a structural role to stabilize the lipid body during desiccation of the seed by preventing coalescence of the oil. Probably interacts with both lipid and phospholipid moieties of lipid bodies. May also provide recognition signals for specific lipase anchorage in lipolysis during seedling growth. The polypeptide is Oleosin Cor a 15 (Corylus avellana (European hazel)).